A 338-amino-acid polypeptide reads, in one-letter code: Mas-related G-protein coupled receptor member B2 (338 aa).

Topologically, residues 1–40 are extracellular; that stretch reads MSGDFLIKNLSTSAWKTNITVLNGSYYIDTSVCVTRNQAM. N-linked (GlcNAc...) asparagine glycans are attached at residues asparagine 9, asparagine 18, and asparagine 23. A helical transmembrane segment spans residues 41-61; that stretch reads ILLSIIISLVGMGLNAIVLWF. Residues 62–89 are Cytoplasmic-facing; sequence LGIRMHTNAFTVYILNLAMADFLYLCSQ. The helical transmembrane segment at 90-110 threads the bilayer; the sequence is FVICLLIAFYIFYSIDINIPL. Position 111 (valine 111) is a topological domain, extracellular. Residues 112-132 traverse the membrane as a helical segment; that stretch reads LYVVPIFAYLSGLSILSTISI. At 133–157 the chain is on the cytoplasmic side; the sequence is ERCLSVIWPIWYRCKRPRHTSAITC. Residues 158–178 traverse the membrane as a helical segment; that stretch reads FVLWVMSLLLGLLEGKACGLL. The Extracellular portion of the chain corresponds to 179–191; that stretch reads FNSFDSYWCETFD. A helical transmembrane segment spans residues 192–212; that stretch reads VITNIWSVVFFGVLCGSSLTL. Over 213–231 the chain is Cytoplasmic; it reads LVRIFCGSQRIPMTRLYVT. A helical transmembrane segment spans residues 232 to 252; that stretch reads ITLTVLVFLIFGLPFGIYWIL. Residues 253-268 lie on the Extracellular side of the membrane; that stretch reads YQWISNFYYVEICNFY. The chain crosses the membrane as a helical span at residues 269-289; the sequence is LEILFLSCVNSCMNPIIYFLV. Over 290–338 the chain is Cytoplasmic; the sequence is GSIRHRRFRRKTLKLLLQRAMQDTPEEEQSGNKSSSEHPEELETVQSCS. Residues 310 to 338 form a disordered region; the sequence is MQDTPEEEQSGNKSSSEHPEELETVQSCS.

This sequence belongs to the G-protein coupled receptor 1 family. Mas subfamily. As to expression, mast cell-specific.

Its subcellular location is the cell membrane. Mast cell-specific receptor for basic secretagogues, i.e. cationic amphiphilic drugs, as well as endo- or exogenous peptides, consisting of a basic head group and a hydrophobic core. Recognizes and binds small molecules containing a cyclized tetrahydroisoquinoline (THIQ), such as non-steroidal neuromuscular blocking drugs (NMBDs), including tubocurarine and atracurium. In response to these compounds, mediates pseudo-allergic reactions characterized by histamine release, inflammation and airway contraction. The polypeptide is Mas-related G-protein coupled receptor member B2 (Mrgprb2) (Mus musculus (Mouse)).